The sequence spans 471 residues: Arginine biosynthesis bifunctional protein ArgJ, mitochondrial (471 aa).

Substrate-binding residues include threonine 201, lysine 230, threonine 241, glutamate 328, asparagine 466, and threonine 471. Threonine 241 serves as the catalytic Nucleophile.

It belongs to the ArgJ family. In terms of assembly, heterodimer of an alpha and a beta chain. In terms of processing, the alpha and beta chains are autoproteolytically processed from a single precursor protein within the mitochondrion.

Its subcellular location is the mitochondrion matrix. It carries out the reaction N(2)-acetyl-L-ornithine + L-glutamate = N-acetyl-L-glutamate + L-ornithine. The enzyme catalyses L-glutamate + acetyl-CoA = N-acetyl-L-glutamate + CoA + H(+). It functions in the pathway amino-acid biosynthesis; L-arginine biosynthesis; L-ornithine and N-acetyl-L-glutamate from L-glutamate and N(2)-acetyl-L-ornithine (cyclic): step 1/1. The protein operates within amino-acid biosynthesis; L-arginine biosynthesis; N(2)-acetyl-L-ornithine from L-glutamate: step 1/4. In terms of biological role, catalyzes two activities which are involved in the cyclic version of arginine biosynthesis: the synthesis of acetylglutamate from glutamate and acetyl-CoA, and of ornithine by transacetylation between acetylornithine and glutamate. This is Arginine biosynthesis bifunctional protein ArgJ, mitochondrial from Ajellomyces capsulatus (strain NAm1 / WU24) (Darling's disease fungus).